The chain runs to 326 residues: Glutaminase 2 (326 aa).

The substrate site is built by S73, N125, E169, N176, Y200, Y252, and V270.

Belongs to the glutaminase family. Homotetramer.

It catalyses the reaction L-glutamine + H2O = L-glutamate + NH4(+). The polypeptide is Glutaminase 2 (Bacillus cereus (strain ATCC 14579 / DSM 31 / CCUG 7414 / JCM 2152 / NBRC 15305 / NCIMB 9373 / NCTC 2599 / NRRL B-3711)).